The sequence spans 191 residues: MIGRLTGTLAEKSPPQLLVDVGGVGYEVDVPMSTFYNLPVLGERVTLLTHFVVREDAQLLYGFLTATERATFRQLLKISGVGARTALSILSGLSVADLAQAVSAQEAGRLVKVPGIGKKTAERLLLELKGKLGPDLALPGAVIRNEAQSDIVQALIALGYNEREAAAAIKPLPADVGVSDGIKLALRALGK.

Residues 1 to 64 (MIGRLTGTLA…EDAQLLYGFL (64 aa)) form a domain I region. The segment at 65–138 (TATERATFRQ…KGKLGPDLAL (74 aa)) is domain II. The flexible linker stretch occupies residues 138–142 (LPGAV). The tract at residues 143–191 (IRNEAQSDIVQALIALGYNEREAAAAIKPLPADVGVSDGIKLALRALGK) is domain III.

It belongs to the RuvA family. As to quaternary structure, homotetramer. Forms an RuvA(8)-RuvB(12)-Holliday junction (HJ) complex. HJ DNA is sandwiched between 2 RuvA tetramers; dsDNA enters through RuvA and exits via RuvB. An RuvB hexamer assembles on each DNA strand where it exits the tetramer. Each RuvB hexamer is contacted by two RuvA subunits (via domain III) on 2 adjacent RuvB subunits; this complex drives branch migration. In the full resolvosome a probable DNA-RuvA(4)-RuvB(12)-RuvC(2) complex forms which resolves the HJ.

It is found in the cytoplasm. Its function is as follows. The RuvA-RuvB-RuvC complex processes Holliday junction (HJ) DNA during genetic recombination and DNA repair, while the RuvA-RuvB complex plays an important role in the rescue of blocked DNA replication forks via replication fork reversal (RFR). RuvA specifically binds to HJ cruciform DNA, conferring on it an open structure. The RuvB hexamer acts as an ATP-dependent pump, pulling dsDNA into and through the RuvAB complex. HJ branch migration allows RuvC to scan DNA until it finds its consensus sequence, where it cleaves and resolves the cruciform DNA. The sequence is that of Holliday junction branch migration complex subunit RuvA from Leptothrix cholodnii (strain ATCC 51168 / LMG 8142 / SP-6) (Leptothrix discophora (strain SP-6)).